A 290-amino-acid chain; its full sequence is Succinate dehydrogenase [ubiquinone] iron-sulfur subunit, mitochondrial (290 aa).

The N-terminal 38 residues, 1 to 38 (MAAAVVGVSLRRGVPARFLRAGLRPVRGLEAVHGICRG), are a transit peptide targeting the mitochondrion. The 2Fe-2S ferredoxin-type domain occupies 50–143 (KKFSIYRWDP…TTKIYPLPHM (94 aa)). Cys-103, Cys-108, Cys-111, and Cys-123 together coordinate [2Fe-2S] cluster. Residues 186–216 (DRQKLDGLYECILCACCSTSCPSYWWNGDKY) form the 4Fe-4S ferredoxin-type domain. [4Fe-4S] cluster contacts are provided by Cys-196, Cys-199, and Cys-202. Cys-206 contributes to the [3Fe-4S] cluster binding site. Residue Trp-211 participates in a ubiquinone binding. 2 residues coordinate [3Fe-4S] cluster: Cys-253 and Cys-259. Cys-263 serves as a coordination point for [4Fe-4S] cluster.

It belongs to the succinate dehydrogenase/fumarate reductase iron-sulfur protein family. Component of complex II composed of four subunits: the flavoprotein (FP) SDHA, iron-sulfur protein (IP) SDHB, and a cytochrome b560 composed of SDHC and SDHD. It depends on [2Fe-2S] cluster as a cofactor. [3Fe-4S] cluster serves as cofactor. The cofactor is [4Fe-4S] cluster.

The protein localises to the mitochondrion inner membrane. It carries out the reaction a quinone + succinate = fumarate + a quinol. It catalyses the reaction (R)-malate + a quinone = enol-oxaloacetate + a quinol. The catalysed reaction is (S)-malate + a quinone = enol-oxaloacetate + a quinol. Its pathway is carbohydrate metabolism; tricarboxylic acid cycle; fumarate from succinate (eukaryal route): step 1/1. With respect to regulation, enol-oxaloacetate inhibits the succinate dehydrogenase activity. Iron-sulfur protein (IP) subunit of the succinate dehydrogenase complex (mitochondrial respiratory chain complex II), responsible for transferring electrons from succinate to ubiquinone (coenzyme Q). SDH also oxidizes malate to the non-canonical enol form of oxaloacetate, enol-oxaloacetate. Enol-oxaloacetate, which is a potent inhibitor of the succinate dehydrogenase activity, is further isomerized into keto-oxaloacetate. The sequence is that of Succinate dehydrogenase [ubiquinone] iron-sulfur subunit, mitochondrial (SDHB) from Gallus gallus (Chicken).